A 121-amino-acid chain; its full sequence is Glycine cleavage system H protein (121 aa).

Residues 16 to 98 (VATVGITAYA…ESGGWFAKIK (83 aa)) enclose the Lipoyl-binding domain. Lysine 57 is modified (N6-lipoyllysine).

Belongs to the GcvH family. The glycine cleavage system is composed of four proteins: P, T, L and H. Requires (R)-lipoate as cofactor.

The glycine cleavage system catalyzes the degradation of glycine. The H protein shuttles the methylamine group of glycine from the P protein to the T protein. The protein is Glycine cleavage system H protein of Caulobacter vibrioides (strain NA1000 / CB15N) (Caulobacter crescentus).